The sequence spans 79 residues: Acyl carrier protein (79 aa).

The region spanning 2–77 (SDIEARVKKI…NAIDYANTHQ (76 aa)) is the Carrier domain. An O-(pantetheine 4'-phosphoryl)serine modification is found at S37.

It belongs to the acyl carrier protein (ACP) family. In terms of processing, 4'-phosphopantetheine is transferred from CoA to a specific serine of apo-ACP by AcpS. This modification is essential for activity because fatty acids are bound in thioester linkage to the sulfhydryl of the prosthetic group.

Its subcellular location is the cytoplasm. It functions in the pathway lipid metabolism; fatty acid biosynthesis. In terms of biological role, carrier of the growing fatty acid chain in fatty acid biosynthesis. This chain is Acyl carrier protein, found in Paracidovorax citrulli (strain AAC00-1) (Acidovorax citrulli).